Consider the following 331-residue polypeptide: Vitamin B12 import system permease protein BtuC (331 aa).

9 consecutive transmembrane segments (helical) span residues 20–42, 62–84, 91–113, 118–140, 147–169, 189–208, 240–262, 277–299, and 306–325; these read IMSVVLVLLSTIHLMVGEVFLSP, LVAAAMIGAALAVSGATLQVLLG, GVLGISGGASLAMVLVMFALPVL, IFMLAAIAGSMLFTLILVGIARA, RLLLVGVALGILSSAIVTWAFYF, ASWYQHTVTLVMLPVLVWLC, LAISVLVGCSVALGGIISFVGLV, YLLPLSAIFGAALLVFADIGARL, and LPLGVMTTSIGAPIFIWMLV.

The protein belongs to the binding-protein-dependent transport system permease family. FecCD subfamily. The complex is composed of two ATP-binding proteins (BtuD), two transmembrane proteins (BtuC) and a solute-binding protein (BtuF).

The protein localises to the cell inner membrane. Part of the ABC transporter complex BtuCDF involved in vitamin B12 import. Involved in the translocation of the substrate across the membrane. The sequence is that of Vitamin B12 import system permease protein BtuC from Vibrio parahaemolyticus serotype O3:K6 (strain RIMD 2210633).